A 106-amino-acid chain; its full sequence is NADH-quinone oxidoreductase subunit K (106 aa).

Helical transmembrane passes span 10–30 (IHYYLILAMIIFTIGVAGVMV), 35–55 (VLIFMSVELILNSVNLVFVTF), and 67–87 (VVFFVMAIAAAEAAIGLAIVI).

It belongs to the complex I subunit 4L family. In terms of assembly, NDH-1 is composed of 14 different subunits. Subunits NuoA, H, J, K, L, M, N constitute the membrane sector of the complex.

It is found in the cell inner membrane. It carries out the reaction a quinone + NADH + 5 H(+)(in) = a quinol + NAD(+) + 4 H(+)(out). Functionally, NDH-1 shuttles electrons from NADH, via FMN and iron-sulfur (Fe-S) centers, to quinones in the respiratory chain. The immediate electron acceptor for the enzyme in this species is believed to be ubiquinone. Couples the redox reaction to proton translocation (for every two electrons transferred, four hydrogen ions are translocated across the cytoplasmic membrane), and thus conserves the redox energy in a proton gradient. This chain is NADH-quinone oxidoreductase subunit K, found in Leptospira interrogans serogroup Icterohaemorrhagiae serovar copenhageni (strain Fiocruz L1-130).